Reading from the N-terminus, the 86-residue chain is Small ribosomal subunit protein bS18 (86 aa).

This sequence belongs to the bacterial ribosomal protein bS18 family. As to quaternary structure, part of the 30S ribosomal subunit. Forms a tight heterodimer with protein bS6.

Its function is as follows. Binds as a heterodimer with protein bS6 to the central domain of the 16S rRNA, where it helps stabilize the platform of the 30S subunit. The sequence is that of Small ribosomal subunit protein bS18 from Campylobacter jejuni subsp. jejuni serotype O:6 (strain 81116 / NCTC 11828).